The primary structure comprises 60 residues: Acrosin (60 aa).

The N-linked (GlcNAc...) asparagine glycan is linked to asparagine 3. The Peptidase S1 domain occupies 24–60 (IIGGQDAAHGSWPWMVSLQIFTYHNNRRYHVCGGSLL).

This sequence belongs to the peptidase S1 family. Heavy chain (catalytic) and a light chain linked by two disulfide bonds. Forms a heterodimer with SERPINA5.

The enzyme catalyses Preferential cleavage: Arg-|-Xaa, Lys-|-Xaa.. Its activity is regulated as follows. Inhibited by SERPINA5. In terms of biological role, acrosin is the major protease of mammalian spermatozoa. It is a serine protease of trypsin-like cleavage specificity, it is synthesized in a zymogen form, proacrosin and stored in the acrosome. This chain is Acrosin (ACR), found in Capra hircus (Goat).